Here is an 807-residue protein sequence, read N- to C-terminus: Glycerol-3-phosphate acyltransferase (807 aa).

The short motif at 308–313 (CHRSHM) is the HXXXXD motif element.

Belongs to the GPAT/DAPAT family.

The protein resides in the cell inner membrane. The catalysed reaction is sn-glycerol 3-phosphate + an acyl-CoA = a 1-acyl-sn-glycero-3-phosphate + CoA. Its pathway is phospholipid metabolism; CDP-diacylglycerol biosynthesis; CDP-diacylglycerol from sn-glycerol 3-phosphate: step 1/3. This Shewanella sp. (strain MR-7) protein is Glycerol-3-phosphate acyltransferase.